The sequence spans 299 residues: DNA-binding transcriptional activator HetR (299 aa).

Residues 1 to 98 (MSNDIDLIKR…GKLLKTLGSQ (98 aa)) are DNA-binding domain. DNA is bound by residues 34–40 (RHGAFLD) and 60–76 (NLRM…KRVK). The interval 99–216 (EPRYLIQFPY…FYALTRPFYA (118 aa)) is flap domain. Residue Ser152 is part of the active site. Residue 179-181 (SEA) coordinates DNA. Residues 217–299 (PADDQERTYI…LQMVFGRKED (83 aa)) form a hood domain region.

The protein belongs to the peptidase S48 family. As to quaternary structure, upon expression in E.coli most protein is monomeric, although varying amounts of homodimer can be seen. Homodimer; disulfide-linked. Homodimer. Binds the 6 residue C-terminal peptide of PatS; one peptide binds to each subunit. In bacterial two-hybrid assays interacts robustly with itself, Alr2902 and Alr3234 and more weakly with Als1930. Post-translationally, probably autodegrades.

With respect to regulation, protease activity is inhibited by PMSF, suggesting this is a serine protease. Functionally, controls heterocyst differentiation. Dimerization is required for DNA-binding. Has both a protease and a DNA-binding activity. Its function is as follows. Controls heterocyst differentiation; increased expression leads to more heterocysts than usual. Has protease activity. Binds the promoter regions of hetR, hepA and patS and is required for their expression. Dimerization is required for DNA-binding, DNA-binding is inhibited by the PatS6 peptide. Binds the inverted repeat 5'-GTAGGCGAGGGGTCTAACCCCTCATTACC-3' found in the hetP promoter, required for expression of hetP. The sequence is that of DNA-binding transcriptional activator HetR from Nostoc sp. (strain PCC 7120 / SAG 25.82 / UTEX 2576).